Here is a 107-residue protein sequence, read N- to C-terminus: Replication protein A 14 kDa subunit A (107 aa).

Met-1 carries the N-acetylmethionine modification.

The protein belongs to the replication factor A protein 3 family. In terms of assembly, component of the heterotrimeric canonical replication protein A complex (RPA).

Its subcellular location is the nucleus. As part of the replication protein A (RPA/RP-A), a single-stranded DNA-binding heterotrimeric complex, may play an essential role in DNA replication, recombination and repair. Binds and stabilizes single-stranded DNA intermediates, preventing complementary DNA reannealing and recruiting different proteins involved in DNA metabolism. The protein is Replication protein A 14 kDa subunit A (RPA3A) of Arabidopsis thaliana (Mouse-ear cress).